The primary structure comprises 363 residues: Methyltransferase pynC (363 aa).

S-adenosyl-L-methionine contacts are provided by residues 199 to 200 (GG), aspartate 225, 254 to 255 (SF), arginine 270, and arginine 271.

This sequence belongs to the class I-like SAM-binding methyltransferase superfamily. Cation-independent O-methyltransferase family.

It functions in the pathway secondary metabolite biosynthesis. Methyltransferase; part of the gene cluster that mediates the biosynthesis of pyranonigrins, a family of antioxidative compounds. The first step of pyranonigrins biosynthesis is performed by the hybrid PKS-NRPS synthetase that condenses 6 malonyl-CoA units to an acetyl starter unit, to form a 1,3,5-trioxotetradecane-6,8-dienyl-ACP. The enoyl reductase (ER) domain of pynA is likely to be functional during the first two rounds of polyketide chain extension, to generate the saturated C-C bonds of the alkyl side chain. PynA subsequently forms the amide bond between the acyl chain and L-serine. Although pynA has a terminal reductase domain, it appears to require the thioesterase pynI for the release of the straight-chain intermediate from pynA via the formation of a tetramic acid pyranonigrin J. The methyltransferase pynC then coverts pyranonigrin J to pyranonigrin I via N-methylation. The FAD-dependent monooxygenase pynG catalyzes an epoxidation-mediated cyclization to form the dihydro-gamma-pyrone moiety, followed by pynD-catalyzed oxidation of the alcohol to the ketone and enolization to yield the characteristic tetramic acid-fused gamma-pyrone core of pyranonigrin H. Pyranonigrin H is substrate of pynH for dehydration-mediated exo-methylene formation from the serine side chain to produce pyranonigrin E, before the oxidase pynE reduces the exo-methylene of pyranonigrin E into a pendant methyl to form pyranonigrin G. The FAD-linked oxidoreductase pynB performs the reverse reaction and converts pyranonigrin G back to pyranonigrin E. The chain is Methyltransferase pynC from Aspergillus niger (strain ATCC MYA-4892 / CBS 513.88 / FGSC A1513).